The primary structure comprises 84 residues: MSMRLAHRLQILLDDECHRRITAVARERGVPVATVVREAIDRGLVSPAGRRKSAGRRLLDAADMSVPEPRELKQELEALRARRG.

In terms of biological role, antitoxin component of a possible type II toxin-antitoxin (TA) system. The cognate toxin is VapC7. This is Putative antitoxin VapB7 (vapB7) from Mycobacterium tuberculosis (strain ATCC 25618 / H37Rv).